A 743-amino-acid polypeptide reads, in one-letter code: Phosphoribosylformylglycinamidine synthase subunit PurL (743 aa).

His-50 is a catalytic residue. Residues Tyr-53 and Lys-92 each coordinate ATP. A Mg(2+)-binding site is contributed by Glu-94. Residues 95-98 (SHNH) and Arg-117 each bind substrate. Catalysis depends on His-96, which acts as the Proton acceptor. Residue Asp-118 coordinates Mg(2+). Gln-241 is a substrate binding site. Residue Asp-269 participates in Mg(2+) binding. Position 313–315 (313–315 (ESQ)) interacts with substrate. Residues Asp-495 and Gly-532 each coordinate ATP. Asn-533 is a Mg(2+) binding site. Ser-535 is a substrate binding site.

The protein belongs to the FGAMS family. As to quaternary structure, monomer. Part of the FGAM synthase complex composed of 1 PurL, 1 PurQ and 2 PurS subunits.

It localises to the cytoplasm. It catalyses the reaction N(2)-formyl-N(1)-(5-phospho-beta-D-ribosyl)glycinamide + L-glutamine + ATP + H2O = 2-formamido-N(1)-(5-O-phospho-beta-D-ribosyl)acetamidine + L-glutamate + ADP + phosphate + H(+). Its pathway is purine metabolism; IMP biosynthesis via de novo pathway; 5-amino-1-(5-phospho-D-ribosyl)imidazole from N(2)-formyl-N(1)-(5-phospho-D-ribosyl)glycinamide: step 1/2. Its function is as follows. Part of the phosphoribosylformylglycinamidine synthase complex involved in the purines biosynthetic pathway. Catalyzes the ATP-dependent conversion of formylglycinamide ribonucleotide (FGAR) and glutamine to yield formylglycinamidine ribonucleotide (FGAM) and glutamate. The FGAM synthase complex is composed of three subunits. PurQ produces an ammonia molecule by converting glutamine to glutamate. PurL transfers the ammonia molecule to FGAR to form FGAM in an ATP-dependent manner. PurS interacts with PurQ and PurL and is thought to assist in the transfer of the ammonia molecule from PurQ to PurL. The protein is Phosphoribosylformylglycinamidine synthase subunit PurL of Rhizobium etli (strain CIAT 652).